The following is a 115-amino-acid chain: Large ribosomal subunit protein uL24 (115 aa).

The protein belongs to the universal ribosomal protein uL24 family. Part of the 50S ribosomal subunit.

One of two assembly initiator proteins, it binds directly to the 5'-end of the 23S rRNA, where it nucleates assembly of the 50S subunit. In terms of biological role, one of the proteins that surrounds the polypeptide exit tunnel on the outside of the subunit. This is Large ribosomal subunit protein uL24 from Acaryochloris marina (strain MBIC 11017).